Here is a 343-residue protein sequence, read N- to C-terminus: Holliday junction branch migration complex subunit RuvB (343 aa).

The interval 1 to 181 is large ATPase domain (RuvB-L); that stretch reads MDRIVEIEKV…FGMQFRLQFY (181 aa). ATP contacts are provided by residues Leu20, Arg21, Gly62, Lys65, Thr66, Thr67, 128 to 130, Arg171, Tyr181, and Arg218; that span reads EDF. Thr66 contacts Mg(2+). The segment at 182–252 is small ATPAse domain (RuvB-S); that stretch reads TDNELARIIS…RAKSSLDSLG (71 aa). The tract at residues 255-343 is head domain (RuvB-H); that stretch reads DLGFDEMDLK…EKQNKGLFNE (89 aa). DNA contacts are provided by Arg308 and Arg313.

Belongs to the RuvB family. Homohexamer. Forms an RuvA(8)-RuvB(12)-Holliday junction (HJ) complex. HJ DNA is sandwiched between 2 RuvA tetramers; dsDNA enters through RuvA and exits via RuvB. An RuvB hexamer assembles on each DNA strand where it exits the tetramer. Each RuvB hexamer is contacted by two RuvA subunits (via domain III) on 2 adjacent RuvB subunits; this complex drives branch migration. In the full resolvosome a probable DNA-RuvA(4)-RuvB(12)-RuvC(2) complex forms which resolves the HJ.

It is found in the cytoplasm. It catalyses the reaction ATP + H2O = ADP + phosphate + H(+). Functionally, the RuvA-RuvB-RuvC complex processes Holliday junction (HJ) DNA during genetic recombination and DNA repair, while the RuvA-RuvB complex plays an important role in the rescue of blocked DNA replication forks via replication fork reversal (RFR). RuvA specifically binds to HJ cruciform DNA, conferring on it an open structure. The RuvB hexamer acts as an ATP-dependent pump, pulling dsDNA into and through the RuvAB complex. RuvB forms 2 homohexamers on either side of HJ DNA bound by 1 or 2 RuvA tetramers; 4 subunits per hexamer contact DNA at a time. Coordinated motions by a converter formed by DNA-disengaged RuvB subunits stimulates ATP hydrolysis and nucleotide exchange. Immobilization of the converter enables RuvB to convert the ATP-contained energy into a lever motion, pulling 2 nucleotides of DNA out of the RuvA tetramer per ATP hydrolyzed, thus driving DNA branch migration. The RuvB motors rotate together with the DNA substrate, which together with the progressing nucleotide cycle form the mechanistic basis for DNA recombination by continuous HJ branch migration. Branch migration allows RuvC to scan DNA until it finds its consensus sequence, where it cleaves and resolves cruciform DNA. The protein is Holliday junction branch migration complex subunit RuvB of Campylobacter fetus subsp. fetus (strain 82-40).